The primary structure comprises 308 residues: Mycothiol acetyltransferase (308 aa).

N-acetyltransferase domains follow at residues 12–149 and 165–308; these read DVLD…RPLG and VTVR…RTET. Residue Glu-43 participates in 1D-myo-inositol 2-(L-cysteinylamino)-2-deoxy-alpha-D-glucopyranoside binding. Acetyl-CoA is bound at residue 88–90; it reads LVV. 1D-myo-inositol 2-(L-cysteinylamino)-2-deoxy-alpha-D-glucopyranoside is bound by residues Glu-192, Lys-231, and Glu-240. Residues 244–246 and 251–257 contribute to the acetyl-CoA site; these read VGV and QGGGLGR. Tyr-278 contributes to the 1D-myo-inositol 2-(L-cysteinylamino)-2-deoxy-alpha-D-glucopyranoside binding site.

It belongs to the acetyltransferase family. MshD subfamily. In terms of assembly, monomer.

The enzyme catalyses 1D-myo-inositol 2-(L-cysteinylamino)-2-deoxy-alpha-D-glucopyranoside + acetyl-CoA = mycothiol + CoA + H(+). Its function is as follows. Catalyzes the transfer of acetyl from acetyl-CoA to desacetylmycothiol (Cys-GlcN-Ins) to form mycothiol. This is Mycothiol acetyltransferase from Streptomyces bingchenggensis (strain BCW-1).